A 445-amino-acid polypeptide reads, in one-letter code: Arabinooligosaccharide-binding protein (445 aa).

Residues 1 to 20 (MGKNILFFSFVGVMVLVLVA) form the signal peptide. The N-palmitoyl cysteine moiety is linked to residue C21. C21 carries the S-diacylglycerol cysteine lipid modification.

Belongs to the bacterial solute-binding protein 1 family. As to quaternary structure, the complex is composed of two ATP-binding proteins (MsmX), two transmembrane proteins (AraP and AraQ) and a solute-binding protein (AraN).

It localises to the cell membrane. Functionally, part of the ABC transporter complex AraNPQ involved in the uptake of arabinooligosaccharides. AraN captures the substrate and delivers it to the two transmembrane components. The polypeptide is Arabinooligosaccharide-binding protein (araN) (Halalkalibacterium halodurans (strain ATCC BAA-125 / DSM 18197 / FERM 7344 / JCM 9153 / C-125) (Bacillus halodurans)).